We begin with the raw amino-acid sequence, 359 residues long: MMP endo-(1,4)-3-O-methyl-alpha-D-mannosidase (359 aa).

In terms of assembly, monomer in solution.

It carries out the reaction Endohydrolysis of 3-O-methyl-alpha-D-mannosyl-(1-&gt;4)-3-O-methyl-D-mannose linkages within (1,4)-3-O-methyl-alpha-D-mannnan substrates.. Functionally, hydrolase involved in the biosynthesis of 3-O-methylmannose polysaccharides (MMP), which are intracellular polymethylated polysaccharides implicated in the modulation of fatty acid metabolism in non-tuberculous mycobacteria. Highly specific hydrolase that catalyzes the internal cleavage of MMP. Is able to hydrolyze purified MMP into distinct lower order oligomannosides but does not cleave acylated or deacylated forms of 6-O-methylglucose lipopolysaccharide (MGLP), beta-mannans, synthetic 4alpha-oligomannosides or its own reaction products. Products were identified as four distinct oligomannosides differing in the number of mannose units (4 to 8) and methylation pattern (free or methylated C1-OH). Might serve as a recycling enzyme that hydrolyzes mature MMP into defined-size smaller oligomannosides that are, in turn, substrates for ManT and MeT1 activities for further processing into new daughter MMP chains. This chain is MMP endo-(1,4)-3-O-methyl-alpha-D-mannosidase, found in Mycolicibacterium hassiacum (strain DSM 44199 / CIP 105218 / JCM 12690 / 3849) (Mycobacterium hassiacum).